A 221-amino-acid polypeptide reads, in one-letter code: Cytidylate kinase (221 aa).

An ATP-binding site is contributed by 11–19 (GPSGVGKST).

Belongs to the cytidylate kinase family. Type 1 subfamily.

The protein localises to the cytoplasm. The catalysed reaction is CMP + ATP = CDP + ADP. The enzyme catalyses dCMP + ATP = dCDP + ADP. This chain is Cytidylate kinase, found in Mycoplasmopsis pulmonis (strain UAB CTIP) (Mycoplasma pulmonis).